The sequence spans 265 residues: Mlc titration factor A (265 aa).

The Zn(2+) site is built by His-111, His-148, His-152, and Glu-211.

The protein belongs to the MtfA family. Interacts with Mlc. Zn(2+) serves as cofactor.

It is found in the cytoplasm. Functionally, involved in the modulation of the activity of the glucose-phosphotransferase system (glucose-PTS). Interacts with the transcriptional repressor Mlc, preventing its interaction with DNA and leading to the modulation of expression of genes regulated by Mlc, including ptsG, which encodes the PTS system glucose-specific EIICB component. Its function is as follows. Shows zinc-dependent metallopeptidase activity. This Escherichia coli O8 (strain IAI1) protein is Mlc titration factor A.